A 461-amino-acid polypeptide reads, in one-letter code: TWiK family of potassium channels protein 18 (461 aa).

The Cytoplasmic portion of the chain corresponds to 1-21; that stretch reads MAIVAQGVSTILTTFQKTFKG. A helical membrane pass occupies residues 22–42; sequence LLPLIILVAYTLLGAWIFWMI. Asparagine 88 carries N-linked (GlcNAc...) asparagine glycosylation. Residues 116–136 constitute an intramembrane region (pore-forming); that stretch reads FLGSIFYCMTVYTTIGYGNIV. The chain crosses the membrane as a helical span at residues 144 to 164; it reads FATILYAFIGIPLTVLSLYCL. At 165–224 the chain is on the cytoplasmic side; the sequence is GSLFAKGCKMLWRFFLKSTRVVSKDLSNKISEAADNIEEGTTAITPSAEKTENNDDDLLS. Residues 225-245 form a helical membrane-spanning segment; the sequence is FPISGLLLITVIWVIFCAVLF. An intramembrane region (pore-forming) is located at residues 253–273; that stretch reads FGTSLYFTLISFTTIGFGDIL. A helical transmembrane segment spans residues 281 to 301; sequence PIVGVLLLIGLSLVSTVMTLI. At 302 to 461 the chain is on the cytoplasmic side; the sequence is QQQIEALASG…GNEDYLEHDI (160 aa). A disordered region spans residues 328–347; sequence REDGEVDEHVDPEEDPENNK.

This sequence belongs to the two pore domain potassium channel (TC 1.A.1.8) family. In terms of tissue distribution, expressed in body wall muscle.

It is found in the membrane. Outwardly rectifying potassium channel protein; activity is sharply augmented by increase in temperature. The protein is TWiK family of potassium channels protein 18 (twk-18) of Caenorhabditis elegans.